A 206-amino-acid chain; its full sequence is Urease accessory protein UreG (206 aa).

Residue 14–21 (GPVGSGKT) participates in GTP binding.

Belongs to the SIMIBI class G3E GTPase family. UreG subfamily. Homodimer. UreD, UreF and UreG form a complex that acts as a GTP-hydrolysis-dependent molecular chaperone, activating the urease apoprotein by helping to assemble the nickel containing metallocenter of UreC. The UreE protein probably delivers the nickel.

The protein resides in the cytoplasm. Facilitates the functional incorporation of the urease nickel metallocenter. This process requires GTP hydrolysis, probably effectuated by UreG. The chain is Urease accessory protein UreG from Brucella anthropi (strain ATCC 49188 / DSM 6882 / CCUG 24695 / JCM 21032 / LMG 3331 / NBRC 15819 / NCTC 12168 / Alc 37) (Ochrobactrum anthropi).